A 743-amino-acid polypeptide reads, in one-letter code: Phosphoribosylformylglycinamidine synthase subunit PurL (743 aa).

H50 is a catalytic residue. Y53 and K92 together coordinate ATP. Residue E94 participates in Mg(2+) binding. Residues 95 to 98 (SHNH) and R117 each bind substrate. H96 serves as the catalytic Proton acceptor. Position 118 (D118) interacts with Mg(2+). Q241 contributes to the substrate binding site. D269 is a binding site for Mg(2+). 313–315 (ESQ) is a substrate binding site. ATP-binding residues include D494 and G531. N532 contributes to the Mg(2+) binding site. S534 is a substrate binding site.

Belongs to the FGAMS family. Monomer. Part of the FGAM synthase complex composed of 1 PurL, 1 PurQ and 2 PurS subunits.

It is found in the cytoplasm. It catalyses the reaction N(2)-formyl-N(1)-(5-phospho-beta-D-ribosyl)glycinamide + L-glutamine + ATP + H2O = 2-formamido-N(1)-(5-O-phospho-beta-D-ribosyl)acetamidine + L-glutamate + ADP + phosphate + H(+). The protein operates within purine metabolism; IMP biosynthesis via de novo pathway; 5-amino-1-(5-phospho-D-ribosyl)imidazole from N(2)-formyl-N(1)-(5-phospho-D-ribosyl)glycinamide: step 1/2. Functionally, part of the phosphoribosylformylglycinamidine synthase complex involved in the purines biosynthetic pathway. Catalyzes the ATP-dependent conversion of formylglycinamide ribonucleotide (FGAR) and glutamine to yield formylglycinamidine ribonucleotide (FGAM) and glutamate. The FGAM synthase complex is composed of three subunits. PurQ produces an ammonia molecule by converting glutamine to glutamate. PurL transfers the ammonia molecule to FGAR to form FGAM in an ATP-dependent manner. PurS interacts with PurQ and PurL and is thought to assist in the transfer of the ammonia molecule from PurQ to PurL. The polypeptide is Phosphoribosylformylglycinamidine synthase subunit PurL (Sinorhizobium fredii (strain HH103)).